A 554-amino-acid chain; its full sequence is MFCIQCEQTIRTPAGNGCSYTQGMCGKSSDTSDLQDLLIYILQGVSSYAALAREVGIIDHEIDTFVPKAFFATLTNVNFDDERIIAYTTQAETFRNRLKAAYEAKCSELNIDAKPMNAPMQLVLGASKPEMLSQALQAVPNRGKDEVHEDIMGLRLLCLYGLKGAAAYMEHARVLDQTSDEVAGEFHEIMAFLGEDSVDADKLFNTAMQIGQLNYRVMAMLDEGETHAFGHPEPTQVNTKSVKGKAILVSGHDMKDLELILEQTQGKGINVYTHGEMLPALAYPELKKYPHLVGNYGSAWQNQQKEFATFPGAVVMTSNCIIDPNVGDYSNRIFTRSIVGWPGVTHIIGDDFSEVIAKAESLEGFIYDEIPHLITIGFARNALMAAAPTVIENVKSGAIKHFFLVGGCDGDKQERGYFTDIATQAPADSVILTLGCGKYKFNKLEFGDINGIPRLLDIGQCNDAYSAIQLAIALSEAFECDINELPLTLVLSWFEQKAIVVLLTLLSLGVKNIMTGPTAPAFLTPNLAKVLEEKFGLRNTTTVEADLNRVLNVA.

4 residues coordinate [2Fe-2S] cluster: C3, C6, C18, and C25. Residues H252, E276, C320, C408, C436, C461, E495, and K497 each coordinate hybrid [4Fe-2O-2S] cluster. C408 bears the Cysteine persulfide mark.

It belongs to the HCP family. Requires [2Fe-2S] cluster as cofactor. The cofactor is hybrid [4Fe-2O-2S] cluster.

It is found in the cytoplasm. The enzyme catalyses A + NH4(+) + H2O = hydroxylamine + AH2 + H(+). Catalyzes the reduction of hydroxylamine to form NH(3) and H(2)O. The chain is Hydroxylamine reductase from Shewanella pealeana (strain ATCC 700345 / ANG-SQ1).